A 914-amino-acid chain; its full sequence is MRFTATAAALVASSIPATLGQHVRDLSNEKWTLSSDALNHTVPGNLPSHAHLDLLKAGVIDDPYHGLNDFNLRWIPESNWTYTTDKIKDLMPIEFCGKYVASTNNQYRQYSFDVSQILEGCNEDPILKIDFGSAPNIVNAIAEDRNSPVWPDGIQQTYEYPNRWFMRKEQSDFGWDWGPAFAPAGPWKPAYIVQLPKAQNIHVLNTDLDIYRKGQINHLPPDQSQPWVVNASIDFVGSLPPNPSMSIEFKDTKSGEILTSKRIGNVTVSGNSVTGVTVLGGVTPKLWWPLGLGDQNLYNITVTVTGHQNQTLAHVTKRTGFRTIFLNQRNITDAQLAQGIAPGANWHFEVNGHEFYAKGSNIIPPDAFWPRVTEARMARLFDAVVAGNQNMLRVWSSGIYLHDFIYDLADERGILLWSEFEFSDALYPVDDAFLDNIAAEVVYNVRRVNHHPSLALWAGGNEIESLMLPTVERKAPEEYAKYVGEYEKLYISLILPLVYQNTRSITYSPSSTTEGYLDVDLSAPVPMVERYHNTTPGSYYGDTDFYNYDSSVSFNSHVYPVGRFANEFGYHSMPSLQTWQQAVDPEDLHFNSTTVMLRNHHYPAGGTFTDNFHNTSLGMGEMTIAVQRYYPIPNKLDSVANFSAWCHATQLFQADMYKSEIQFYRRGSGMPERQLGSLYWQLEDIWQAPSWAGIEYGGRWKVLHYVSRDIYQRIIVSPFWNYTTGDLDLYVTSDLWESAKGKVNLTWLDLSGTPLPHNAGTPGSVPFNVGALNTTKIYSTNIKNLTLPNPKDAILVLSLSGEGHLPNSDKKTTFTHQNHFTPVFPKDLALVDPGLELSYNTKSKTFTVEAKSGVSLYTWLDYPADVVGYFDENAFVLLPGQKKEIGFTVQEDNTDGKWVQGVTVQSLWNQTLEK.

The signal sequence occupies residues 1–20; sequence MRFTATAAALVASSIPATLG. Asn39, Asn79, Asn230, Asn265, Asn299, Asn309, and Asn330 each carry an N-linked (GlcNAc...) asparagine glycan. Glu462 serves as the catalytic Proton donor. Asn591, Asn614, Asn641, Asn721, Asn744, Asn773, Asn784, and Asn909 each carry an N-linked (GlcNAc...) asparagine glycan.

It belongs to the glycosyl hydrolase 2 family. Beta-mannosidase A subfamily. As to quaternary structure, homodimer.

Its subcellular location is the secreted. It catalyses the reaction Hydrolysis of terminal, non-reducing beta-D-mannose residues in beta-D-mannosides.. It functions in the pathway glycan metabolism; N-glycan degradation. Functionally, exoglycosidase that cleaves the single beta-linked mannose residue from the non-reducing end of beta-mannosidic oligosaccharides of various complexity and length. Involved in the degradation of polymeric mannan and galactomannan. This Aspergillus flavus (strain ATCC 200026 / FGSC A1120 / IAM 13836 / NRRL 3357 / JCM 12722 / SRRC 167) protein is Beta-mannosidase A (mndA).